A 280-amino-acid polypeptide reads, in one-letter code: Protein HEAT-INDUCED TAS1 TARGET 4 (280 aa).

This sequence belongs to the heat induced plant HTT protein family. In terms of tissue distribution, expressed in seedlings, leaves, stems, inflorescences and siliques.

Its subcellular location is the cytoplasm. The protein localises to the nucleus. In terms of biological role, mediates both basal and acquired thermotolerance. This is Protein HEAT-INDUCED TAS1 TARGET 4 from Arabidopsis thaliana (Mouse-ear cress).